A 53-amino-acid polypeptide reads, in one-letter code: Gene 87 protein (53 aa).

The polypeptide is Gene 87 protein (87) (Mycobacterium phage L5 (Mycobacteriophage L5)).